The chain runs to 204 residues: MTFKGFSKKDFKTMQISGLEARMTGIQNDIQPKFRAVGEELTTYLSAKLGDEMFLHIARHQRRSVNPPDSTWLAICHDKRGYKKHPHFQVGLFDKYLFIWLAFIYENEESLKIANRFLKEKKLLADLPDNFAISPDHTEEKTYPVHDGQLEATLERFRDVKKGEFLVGKIYLPDDNHLSPAKDFIKEAEMVLDELIPLYKAALQ.

It belongs to the UPF0637 family.

This Listeria monocytogenes serovar 1/2a (strain ATCC BAA-679 / EGD-e) protein is UPF0637 protein lmo1065.